The primary structure comprises 310 residues: Lymphotoxin-beta (310 aa).

Over 1–27 (MGALGLQGRGGRPQGTGCLLLAVAGAT) the chain is Cytoplasmic. A helical; Signal-anchor for type II membrane protein transmembrane segment spans residues 28–48 (SLVTLLLAVPITVLAVLALVP). Residues 49-310 (QEQGGLVMES…LGKCLHSANV (262 aa)) lie on the Extracellular side of the membrane. The tract at residues 67 to 86 (QGLSKSNGLPSRLHSQIPSS) is disordered. A THD domain is found at 138 to 293 (PAAHLIGAWM…GKTFFGAVMV (156 aa)). N272 is a glycosylation site (N-linked (GlcNAc...) asparagine).

It belongs to the tumor necrosis factor family. As to quaternary structure, heterotrimer of either two LTB and one LTA subunits or (less prevalent) two LTA and one LTB subunits.

It is found in the membrane. Functionally, cytokine that binds to LTBR/TNFRSF3. May play a specific role in immune response regulation. Provides the membrane anchor for the attachment of the heterotrimeric complex to the cell surface. The polypeptide is Lymphotoxin-beta (LTB) (Marmota monax (Woodchuck)).